Here is a 324-residue protein sequence, read N- to C-terminus: Methionyl-tRNA formyltransferase (324 aa).

Residue 114-117 coordinates (6S)-5,6,7,8-tetrahydrofolate; it reads SLLP.

This sequence belongs to the Fmt family.

It catalyses the reaction L-methionyl-tRNA(fMet) + (6R)-10-formyltetrahydrofolate = N-formyl-L-methionyl-tRNA(fMet) + (6S)-5,6,7,8-tetrahydrofolate + H(+). Attaches a formyl group to the free amino group of methionyl-tRNA(fMet). The formyl group appears to play a dual role in the initiator identity of N-formylmethionyl-tRNA by promoting its recognition by IF2 and preventing the misappropriation of this tRNA by the elongation apparatus. The protein is Methionyl-tRNA formyltransferase of Parabacteroides distasonis (strain ATCC 8503 / DSM 20701 / CIP 104284 / JCM 5825 / NCTC 11152).